We begin with the raw amino-acid sequence, 631 residues long: Origin recognition complex subunit 1 (631 aa).

Composition is skewed to low complexity over residues methionine 1 to isoleucine 14 and lysine 22 to histidine 37. The segment at methionine 1 to asparagine 164 is disordered. Basic and acidic residues predominate over residues aspartate 55–asparagine 80. Residues glutamate 91–aspartate 104 show a composition bias toward acidic residues. Over residues glutamate 105 to phenylalanine 133 the composition is skewed to basic and acidic residues. Acidic residues predominate over residues glutamate 141–glutamate 160. ATP is bound by residues valine 230 and glycine 265–alanine 273. Mg(2+) contacts are provided by aspartate 361 and glutamate 362. 3 residues coordinate ATP: glutamate 362, asparagine 395, and arginine 460.

The protein belongs to the ORC1 family. As to quaternary structure, ORC is composed of six subunits.

It localises to the nucleus. Component of the origin recognition complex (ORC) that binds origins of replication. DNA-binding is ATP-dependent, however specific DNA sequences that define origins of replication have not been identified so far. ORC is required to assemble the pre-replication complex necessary to initiate DNA replication. The sequence is that of Origin recognition complex subunit 1 (orcA) from Dictyostelium discoideum (Social amoeba).